The chain runs to 256 residues: Calsenilin (256 aa).

The disordered stretch occupies residues 1-22 (MQRTKEAVKASDGNLLGDPGRI). Lys26 participates in a covalent cross-link: Glycyl lysine isopeptide (Lys-Gly) (interchain with G-Cter in SUMO1). Residues Cys45 and Cys46 are each lipidated (S-palmitoyl cysteine). 2 positions are modified to phosphoserine: Ser60 and Ser63. The EF-hand 1; degenerate domain maps to 67 to 123 (LELSTVRHQPEGLDQLQAQTKFTKKELQSLYRGFKNECPTGLVDEDTFKLIYSQFFP). Residue Lys90 forms a Glycyl lysine isopeptide (Lys-Gly) (interchain with G-Cter in SUMO1) linkage. 3 consecutive EF-hand domains span residues 126–161 (DATT…LLRG), 162–197 (TVHE…IYDM), and 210–245 (APLE…DENI). Positions 175, 177, 179, 181, 186, 223, 225, 227, and 234 each coordinate Ca(2+). The tract at residues 243–256 (ENIMNSMQLFENVI) is interaction with KCND2.

It belongs to the recoverin family. In terms of assembly, binds to DNA as a homomultimer. Dimerization is induced by binding to calcium. Interacts with the C-terminus of PSEN1 and PSEN2 and with PSEN2 CTF subunit. Associates with KCN1. Component of heteromultimeric potassium channels. Identified in potassium channel complexes containing KCND1, KCND2, KCND3, KCNIP1, KCNIP2, KCNIP3, KCNIP4, DPP6 and DPP10. Interacts with KCND2 and KCND3. In terms of processing, palmitoylated. Palmitoylation enhances association with the plasma membrane. Post-translationally, proteolytically cleaved by caspase-3. In terms of tissue distribution, highly expressed in brain. Isoform 1 or isoform 4 (T+ forms) are expressed at equal levels with isoform 2 or isoform 3 (T- forms). Primarily detected in the layer V and deep layer VI of the cerebral cortex, the hippocampus, and the entire cerebellum. Expressed at low levels in testis. Also expressed in heart.

It localises to the cytoplasm. The protein localises to the cell membrane. The protein resides in the endoplasmic reticulum. Its subcellular location is the golgi apparatus. It is found in the nucleus. Calcium-dependent transcriptional repressor that binds to the DRE element of genes including PDYN and FOS. Affinity for DNA is reduced upon binding to calcium and enhanced by binding to magnesium. Seems to be involved in nociception. Functionally, regulatory subunit of Kv4/D (Shal)-type voltage-gated rapidly inactivating A-type potassium channels, such as KCND2/Kv4.2 and KCND3/Kv4.3. Modulates channel expression at the cell membrane, gating characteristics, inactivation kinetics and rate of recovery from inactivation in a calcium-dependent and isoform-specific manner. Its function is as follows. May play a role in the regulation of PSEN2 proteolytic processing and apoptosis. Together with PSEN2 involved in modulation of amyloid-beta formation. In Mus musculus (Mouse), this protein is Calsenilin (Kcnip3).